The primary structure comprises 821 residues: Kinetochore protein SLK19 (821 aa).

Disordered stretches follow at residues 1-52 and 99-153; these read MNEV…SQFV and FDDK…NDKE. Residue threonine 7 is modified to Phosphothreonine; by CDC28. The segment covering 15-51 has biased composition (polar residues); it reads QAQQREQNSENCSQERNPRTFNSEPDSSFNSPGSSQF. 2 stretches are compositionally biased toward basic and acidic residues: residues 99 to 122 and 136 to 153; these read FDDK…DKHV and SSEK…NDKE. Phosphoserine is present on residues serine 188 and serine 189. Residue serine 201 is modified to Phosphoserine; by CDC28. Position 216 is a phosphoserine (serine 216). Threonine 273 is modified (phosphothreonine). Disordered regions lie at residues 274–298 and 699–720; these read PLYE…DDNQ and EQNN…RDDE. At serine 283 the chain carries Phosphoserine. Positions 310 to 821 form a coiled coil; sequence AKRNEELTDQ…LLKLLENEKK (512 aa).

Cleaved by ESP1 at the onset of anaphase. In terms of processing, phosphorylated by CDC5/Polo-like kinase at the onset of anaphase. Phosphorylation takes places at proximity to cleavage sites and is required for an efficient cleavage by ESP1. Phosphorylated also by CDC28.

It localises to the chromosome. The protein localises to the centromere. The protein resides in the kinetochore. Its subcellular location is the cytoplasm. It is found in the cytoskeleton. It localises to the microtubule organizing center. The protein localises to the spindle pole body. Functionally, has a role in spindle assembly and stability. Required to ensure a timely exit form mitosis. Essential to maintain pre-anaphase spindle polarity. Associates to the plus ends of the microtubules at the kinetochore and spindle midzone. A component of the FEAR (CDC14 Early Anaphase Release) network which promotes CDC14 release from the nucleolus during early anaphase. Required for proper chromosome segregation during meiosis I where it prevents premature sister chromatid separation. The sequence is that of Kinetochore protein SLK19 (SLK19) from Saccharomyces cerevisiae (strain ATCC 204508 / S288c) (Baker's yeast).